The sequence spans 322 residues: Homoserine kinase (322 aa).

Position 107–117 (107–117 (PLSSGMGGSAA)) interacts with ATP.

It belongs to the GHMP kinase family. Homoserine kinase subfamily.

It localises to the cytoplasm. It carries out the reaction L-homoserine + ATP = O-phospho-L-homoserine + ADP + H(+). It participates in amino-acid biosynthesis; L-threonine biosynthesis; L-threonine from L-aspartate: step 4/5. Its function is as follows. Catalyzes the ATP-dependent phosphorylation of L-homoserine to L-homoserine phosphate. This is Homoserine kinase from Xylella fastidiosa (strain M23).